The sequence spans 279 residues: Tryptophan synthase alpha chain (279 aa).

Active-site proton acceptor residues include glutamate 50 and aspartate 61.

This sequence belongs to the TrpA family. In terms of assembly, tetramer of two alpha and two beta chains.

It catalyses the reaction (1S,2R)-1-C-(indol-3-yl)glycerol 3-phosphate + L-serine = D-glyceraldehyde 3-phosphate + L-tryptophan + H2O. Its pathway is amino-acid biosynthesis; L-tryptophan biosynthesis; L-tryptophan from chorismate: step 5/5. Its function is as follows. The alpha subunit is responsible for the aldol cleavage of indoleglycerol phosphate to indole and glyceraldehyde 3-phosphate. This is Tryptophan synthase alpha chain from Brucella ovis (strain ATCC 25840 / 63/290 / NCTC 10512).